Reading from the N-terminus, the 141-residue chain is Nucleoside diphosphate kinase (141 aa).

ATP is bound by residues Lys11, Phe59, Arg87, Thr93, Arg104, and Asn114. Catalysis depends on His117, which acts as the Pros-phosphohistidine intermediate.

It belongs to the NDK family. Homotetramer. Mg(2+) is required as a cofactor.

It localises to the cytoplasm. The enzyme catalyses a 2'-deoxyribonucleoside 5'-diphosphate + ATP = a 2'-deoxyribonucleoside 5'-triphosphate + ADP. It catalyses the reaction a ribonucleoside 5'-diphosphate + ATP = a ribonucleoside 5'-triphosphate + ADP. Functionally, major role in the synthesis of nucleoside triphosphates other than ATP. The ATP gamma phosphate is transferred to the NDP beta phosphate via a ping-pong mechanism, using a phosphorylated active-site intermediate. In Polaromonas naphthalenivorans (strain CJ2), this protein is Nucleoside diphosphate kinase.